Here is a 1268-residue protein sequence, read N- to C-terminus: SR-related and CTD-associated factor 8 (1268 aa).

The region spanning 1-139 (MEAVKTFNSE…PLLDMAAGIP (139 aa)) is the CID domain. Residue Thr6 is modified to Phosphothreonine. A Glycyl lysine isopeptide (Lys-Gly) (interchain with G-Cter in SUMO1) cross-link involves residue Lys18. The segment covering 270–283 (GEDSEHSEESKKEM) has biased composition (basic and acidic residues). Disordered stretches follow at residues 270–290 (GEDSEHSEESKKEMPTPQLSH), 322–355 (QQQPQKVTPQDSQEGTFGSEHSASPSQGSSQQHF), and 385–469 (EIFE…PVRS). Ser273 is subject to Phosphoserine. Positions 327-354 (KVTPQDSQEGTFGSEHSASPSQGSSQQH) are enriched in polar residues. Residues 394 to 443 (VAVRSRSRTHSRSRSRSPRKRRSRSRSGSRKRKHRKRSRSHSREKKRKAS) show a composition bias toward basic residues. A compositionally biased stretch (basic and acidic residues) spans 447-461 (SSERRAREREKERQK). The 75-residue stretch at 477–551 (TTLWVGQVDK…KVIKIAWALN (75 aa)) folds into the RRM domain. The residue at position 617 (Ser617) is a Phosphoserine. The segment at 776 to 807 (QIPSGENTRPVIPSDIPSSAAMLAQPPGASST) is disordered. Asymmetric dimethylarginine occurs at positions 915, 925, and 936. 2 disordered regions span residues 984 to 1012 (PGRPSIDNVPNPDKRIPLGNDNIQQEGDR) and 1040 to 1065 (RLDPREGPGRPPLDARDHFGRPPVDM). Arg1071 carries the asymmetric dimethylarginine modification. Residues 1199–1268 (ATSQRKGDNV…VVESTETEGT (70 aa)) form a disordered region. Residues 1249 to 1262 (GTVAGVESEAVVES) show a composition bias toward low complexity.

In terms of assembly, interacts with POLR2A; via C-terminal heptapeptide repeat domain (CTD) phosphorylated at 'Ser-2' and 'Ser-5'. Identified in a complex with CDC5L and other spliceosomal proteins.

It is found in the nucleus. The protein resides in the nucleus matrix. Anti-terminator protein required to prevent early mRNA termination during transcription. Together with SCAF4, acts by suppressing the use of early, alternative poly(A) sites, thereby preventing the accumulation of non-functional truncated proteins. Mechanistically, associates with the phosphorylated C-terminal heptapeptide repeat domain (CTD) of the largest RNA polymerase II subunit (POLR2A), and subsequently binds nascent RNA upstream of early polyadenylation sites to prevent premature mRNA transcript cleavage and polyadenylation. Independently of SCAF4, also acts as a positive regulator of transcript elongation. This chain is SR-related and CTD-associated factor 8, found in Mus musculus (Mouse).